A 398-amino-acid polypeptide reads, in one-letter code: Histidinol-phosphate aminotransferase (398 aa).

The span at 1 to 10 shows a compositional bias: polar residues; the sequence is MTGQRATPQP. Positions 1–30 are disordered; that stretch reads MTGQRATPQPTLDDLPLRDDLRGKSPYGAP. K234 is modified (N6-(pyridoxal phosphate)lysine).

It belongs to the class-II pyridoxal-phosphate-dependent aminotransferase family. Histidinol-phosphate aminotransferase subfamily. As to quaternary structure, homodimer. Pyridoxal 5'-phosphate is required as a cofactor.

The catalysed reaction is L-histidinol phosphate + 2-oxoglutarate = 3-(imidazol-4-yl)-2-oxopropyl phosphate + L-glutamate. The protein operates within amino-acid biosynthesis; L-histidine biosynthesis; L-histidine from 5-phospho-alpha-D-ribose 1-diphosphate: step 7/9. The chain is Histidinol-phosphate aminotransferase from Mycobacterium avium (strain 104).